Reading from the N-terminus, the 465-residue chain is Methylenetetrahydrofolate--tRNA-(uracil-5-)-methyltransferase TrmFO (465 aa).

3–8 (GAGLAG) contacts FAD.

The protein belongs to the MnmG family. TrmFO subfamily. FAD serves as cofactor.

Its subcellular location is the cytoplasm. The catalysed reaction is uridine(54) in tRNA + (6R)-5,10-methylene-5,6,7,8-tetrahydrofolate + NADH + H(+) = 5-methyluridine(54) in tRNA + (6S)-5,6,7,8-tetrahydrofolate + NAD(+). It catalyses the reaction uridine(54) in tRNA + (6R)-5,10-methylene-5,6,7,8-tetrahydrofolate + NADPH + H(+) = 5-methyluridine(54) in tRNA + (6S)-5,6,7,8-tetrahydrofolate + NADP(+). Catalyzes the folate-dependent formation of 5-methyl-uridine at position 54 (M-5-U54) in all tRNAs. This Bradyrhizobium sp. (strain BTAi1 / ATCC BAA-1182) protein is Methylenetetrahydrofolate--tRNA-(uracil-5-)-methyltransferase TrmFO.